Here is a 910-residue protein sequence, read N- to C-terminus: von Willebrand factor A domain-containing protein DDB_G0292740 (910 aa).

Positions 63 to 194 (AYQYYNVSSF…SITIHITMIS (132 aa)) constitute a VIT domain. The interval 297–318 (IKNNPHSDSDSDSDDEENKKEN) is disordered. A VWFA domain is found at 346-515 (EFIFLIDCSG…DMETEVMKLL (170 aa)). Positions 703-719 (QYQQQQQQQQQNFNSGF) are enriched in low complexity. A disordered region spans residues 703-815 (QYQQQQQQQQ…TQSESTPSND (113 aa)). Positions 720 to 749 (APPPPPMMSSGPPPPPGSSFGAPPPPPPGG) are enriched in pro residues. Residues 750–802 (AFPTSSISEKKSSSQSSSSYLPPTMSLSRKSSLSPSSPSKNYPSPKLSSPSLS) show a composition bias toward low complexity. Positions 803–815 (YGSTQSESTPSND) are enriched in polar residues.

This is von Willebrand factor A domain-containing protein DDB_G0292740 from Dictyostelium discoideum (Social amoeba).